The chain runs to 112 residues: Diuretic hormone class 2 (112 aa).

The N-terminal stretch at M1–A24 is a signal peptide. A propeptide spanning residues Y25–E71 is cleaved from the precursor. P104 carries the post-translational modification Proline amide. A propeptide spanning residues R108–H112 is cleaved from the precursor.

Expressed in corpora cardiaca (CC), corpora allata (CA), antennal lobe (AL) and gnathal ganglion (GNG) (at protein level). Expression in CC, CA and AL detected in most animals, expression in GNG in few animals (at protein level).

The protein resides in the secreted. Functionally, regulation of fluid secretion. Stimulates Malpighian tubule fluid secretion. The protein is Diuretic hormone class 2 of Agrotis ipsilon (Black cutworm moth).